The following is a 310-amino-acid chain: DNA-directed RNA polymerase subunit alpha (310 aa).

An alpha N-terminal domain (alpha-NTD) region spans residues M1–D230. The alpha C-terminal domain (alpha-CTD) stretch occupies residues N242–H310.

This sequence belongs to the RNA polymerase alpha chain family. As to quaternary structure, in plastids the minimal PEP RNA polymerase catalytic core is composed of four subunits: alpha, beta, beta', and beta''. When a (nuclear-encoded) sigma factor is associated with the core the holoenzyme is formed, which can initiate transcription.

The protein resides in the plastid. It is found in the chloroplast. The catalysed reaction is RNA(n) + a ribonucleoside 5'-triphosphate = RNA(n+1) + diphosphate. Functionally, DNA-dependent RNA polymerase catalyzes the transcription of DNA into RNA using the four ribonucleoside triphosphates as substrates. The polypeptide is DNA-directed RNA polymerase subunit alpha (Cyanidium caldarium (Red alga)).